We begin with the raw amino-acid sequence, 536 residues long: Lysosomal acid glucosylceramidase (536 aa).

The signal sequence occupies residues 1 to 39 (MEFSSPSREECPKPSGRVSIMAGSLTGLLLLQAVSWASG). 2 disulfide bridges follow: Cys-43-Cys-55 and Cys-57-Cys-62. Asn-58, Asn-98, and Asn-185 each carry an N-linked (GlcNAc...) asparagine glycan. Glu-274 acts as the Proton donor in catalysis. The N-linked (GlcNAc...) asparagine glycan is linked to Asn-309. Glu-379 serves as the catalytic Nucleophile. The N-linked (GlcNAc...) asparagine glycan is linked to Asn-501.

This sequence belongs to the glycosyl hydrolase 30 family. As to quaternary structure, interacts with saposin-C. Interacts with SCARB2. Interacts with TCP1. Interacts with GRN; this interaction prevents aggregation of GBA1-SCARB2 complex via interaction with HSPA1A upon stress.

The protein resides in the lysosome membrane. It catalyses the reaction a beta-D-glucosyl-(1&lt;-&gt;1')-N-acylsphing-4-enine + H2O = an N-acylsphing-4-enine + D-glucose. The catalysed reaction is a beta-D-galactosyl-(1&lt;-&gt;1')-N-acylsphing-4-enine + H2O = an N-acylsphing-4-enine + D-galactose. It carries out the reaction cholesteryl 3-beta-D-glucoside + H2O = cholesterol + D-glucose. The enzyme catalyses a beta-D-glucosyl-(1&lt;-&gt;1')-N-acylsphing-4-enine + cholesterol = cholesteryl 3-beta-D-glucoside + an N-acylsphing-4-enine. It catalyses the reaction beta-D-glucosyl-N-(9Z-octadecenoyl)-sphing-4E-enine + cholesterol = N-(9Z-octadecenoyl)-sphing-4-enine + cholesteryl 3-beta-D-glucoside. The catalysed reaction is beta-D-glucosyl-N-octanoylsphing-4E-enine + cholesterol = N-octanoylsphing-4-enine + cholesteryl 3-beta-D-glucoside. It carries out the reaction beta-D-glucosyl-N-dodecanoylsphing-4-enine + cholesterol = N-dodecanoylsphing-4-enine + cholesteryl 3-beta-D-glucoside. The enzyme catalyses beta-D-glucosyl-(1&lt;-&gt;1)-N-octadecanoylsphing-4-enine + cholesterol = N-octadecanoylsphing-4-enine + cholesteryl 3-beta-D-glucoside. It catalyses the reaction beta-D-glucosyl-(1&lt;-&gt;1')-N-(15Z-tetracosenoyl)-sphing-4-enine + cholesterol = N-(15Z-tetracosenoyl)-sphing-4-enine + cholesteryl 3-beta-D-glucoside. The catalysed reaction is a beta-D-galactosyl-(1&lt;-&gt;1')-N-acylsphing-4-enine + cholesterol = cholesteryl 3-beta-D-galactoside + an N-acylsphing-4-enine. It carries out the reaction 1-(beta-D-galactosyl)-N-dodecanoylsphing-4-enine + cholesterol = cholesteryl 3-beta-D-galactoside + N-dodecanoylsphing-4-enine. The enzyme catalyses a beta-D-xylosyl-(1&lt;-&gt;1')-N-acylsphing-4-enine + cholesterol = cholesteryl 3-beta-D-xyloside + an N-acylsphing-4-enine. It catalyses the reaction beta-D-xylosyl-(1&lt;-&gt;1')-N-(9Z-octadecenoyl)-sphing-4-enine + cholesterol = cholesteryl 3-beta-D-xyloside + N-(9Z-octadecenoyl)-sphing-4-enine. It functions in the pathway steroid metabolism; cholesterol metabolism. The protein operates within sphingolipid metabolism. Its function is as follows. Glucosylceramidase that catalyzes, within the lysosomal compartment, the hydrolysis of glucosylceramides/GlcCers (such as beta-D-glucosyl-(1&lt;-&gt;1')-N-acylsphing-4-enine) into free ceramides (such as N-acylsphing-4-enine) and glucose. Plays a central role in the degradation of complex lipids and the turnover of cellular membranes. Through the production of ceramides, participates in the PKC-activated salvage pathway of ceramide formation. Catalyzes the glucosylation of cholesterol, through a transglucosylation reaction where glucose is transferred from GlcCer to cholesterol. GlcCer containing mono-unsaturated fatty acids (such as beta-D-glucosyl-N-(9Z-octadecenoyl)-sphing-4-enine) are preferred as glucose donors for cholesterol glucosylation when compared with GlcCer containing same chain length of saturated fatty acids (such as beta-D-glucosyl-N-octadecanoyl-sphing-4-enine). Under specific conditions, may alternatively catalyze the reverse reaction, transferring glucose from cholesteryl 3-beta-D-glucoside to ceramide. Can also hydrolyze cholesteryl 3-beta-D-glucoside producing glucose and cholesterol. Catalyzes the hydrolysis of galactosylceramides/GalCers (such as beta-D-galactosyl-(1&lt;-&gt;1')-N-acylsphing-4-enine), as well as the transfer of galactose between GalCers and cholesterol in vitro, but with lower activity than with GlcCers. Contrary to GlcCer and GalCer, xylosylceramide/XylCer (such as beta-D-xyosyl-(1&lt;-&gt;1')-N-acylsphing-4-enine) is not a good substrate for hydrolysis, however it is a good xylose donor for transxylosylation activity to form cholesteryl 3-beta-D-xyloside. The polypeptide is Lysosomal acid glucosylceramidase (GBA1) (Pan troglodytes (Chimpanzee)).